A 313-amino-acid chain; its full sequence is L-lactate dehydrogenase 1 (313 aa).

Val-15, Asp-36, Arg-41, and Tyr-66 together coordinate NAD(+). Residues Gln-83, Arg-89, and 121–124 (NPVD) contribute to the substrate site. NAD(+)-binding positions include 119–121 (ASN) and Ser-144. Residue 149-152 (DTAR) coordinates substrate. Arg-154 and His-169 together coordinate beta-D-fructose 1,6-bisphosphate. The active-site Proton acceptor is the His-176. Tyr-218 bears the Phosphotyrosine mark. Residue Thr-227 coordinates substrate.

This sequence belongs to the LDH/MDH superfamily. LDH family. As to quaternary structure, homotetramer.

The protein localises to the cytoplasm. It carries out the reaction (S)-lactate + NAD(+) = pyruvate + NADH + H(+). It functions in the pathway fermentation; pyruvate fermentation to lactate; (S)-lactate from pyruvate: step 1/1. Its activity is regulated as follows. Allosterically activated by fructose 1,6-bisphosphate (FBP). In terms of biological role, catalyzes the conversion of lactate to pyruvate. This chain is L-lactate dehydrogenase 1, found in Listeria innocua serovar 6a (strain ATCC BAA-680 / CLIP 11262).